Here is a 378-residue protein sequence, read N- to C-terminus: 2-aminoethylphosphonate--pyruvate transaminase 1 (378 aa).

Position 194 is an N6-(pyridoxal phosphate)lysine (Lys194).

The protein belongs to the class-V pyridoxal-phosphate-dependent aminotransferase family. PhnW subfamily. Homodimer. Pyridoxal 5'-phosphate is required as a cofactor.

It catalyses the reaction (2-aminoethyl)phosphonate + pyruvate = phosphonoacetaldehyde + L-alanine. In terms of biological role, involved in phosphonate degradation. The sequence is that of 2-aminoethylphosphonate--pyruvate transaminase 1 from Cupriavidus pinatubonensis (strain JMP 134 / LMG 1197) (Cupriavidus necator (strain JMP 134)).